Here is a 375-residue protein sequence, read N- to C-terminus: Chaperone protein DnaJ (375 aa).

One can recognise a J domain in the interval 5-70; the sequence is DYYEVLGVER…GKRMAYDQYG (66 aa). The CR-type zinc finger occupies 134-212; it reads GTTVTIRVPT…CHGQGRVEEH (79 aa). Residues Cys-147, Cys-150, Cys-164, Cys-167, Cys-186, Cys-189, Cys-200, and Cys-203 each contribute to the Zn(2+) site. 4 CXXCXGXG motif repeats span residues 147 to 154, 164 to 171, 186 to 193, and 200 to 207; these read CKTCDGSG, CTTCGGIG, CPRCHGSG, and CPDCHGQG.

This sequence belongs to the DnaJ family. As to quaternary structure, homodimer. Zn(2+) serves as cofactor.

The protein resides in the cytoplasm. Its function is as follows. Participates actively in the response to hyperosmotic and heat shock by preventing the aggregation of stress-denatured proteins and by disaggregating proteins, also in an autonomous, DnaK-independent fashion. Unfolded proteins bind initially to DnaJ; upon interaction with the DnaJ-bound protein, DnaK hydrolyzes its bound ATP, resulting in the formation of a stable complex. GrpE releases ADP from DnaK; ATP binding to DnaK triggers the release of the substrate protein, thus completing the reaction cycle. Several rounds of ATP-dependent interactions between DnaJ, DnaK and GrpE are required for fully efficient folding. Also involved, together with DnaK and GrpE, in the DNA replication of plasmids through activation of initiation proteins. The polypeptide is Chaperone protein DnaJ (Azotobacter vinelandii (strain DJ / ATCC BAA-1303)).